A 171-amino-acid polypeptide reads, in one-letter code: Laminin subunit beta-1 (171 aa).

The signal sequence occupies residues 1 to 29; sequence MNGRTQNLWFSTFRLVIVYALFFAKLCFG. Disulfide bonds link C59/C69, C72/C81, C84/C100, C103/C118, and C105/C128. Laminin EGF-like domains are found at residues 66-102, 103-160, and 161-171; these read TGVCNNCLHNTKGTNCQLCKDGYYGNALLGTENVCQR, CQCP…TCKK, and CLCNGNINSAS. A glycan (N-linked (GlcNAc...) asparagine) is linked at N130. 2 disulfide bridges follow: C131–C140 and C143–C158.

In terms of assembly, laminin is a complex glycoprotein, consisting of three different polypeptide chains (alpha, beta, gamma), which are bound to each other by disulfide bonds into a cross-shaped molecule comprising one long and three short arms with globules at each end.

The protein localises to the secreted. The protein resides in the extracellular space. It localises to the extracellular matrix. Its subcellular location is the basement membrane. Functionally, binding to cells via a high affinity receptor, laminin is thought to mediate the attachment, migration and organization of cells into tissues during embryonic development by interacting with other extracellular matrix components. The protein is Laminin subunit beta-1 of Hydra vulgaris (Hydra).